A 70-amino-acid polypeptide reads, in one-letter code: Translation initiation factor IF-1 (70 aa).

In terms of domain architecture, S1-like spans 1 to 70; the sequence is MKETNLSIKG…LTKGRIIYRH (70 aa).

It belongs to the IF-1 family. Component of the 30S ribosomal translation pre-initiation complex which assembles on the 30S ribosome in the order IF-2 and IF-3, IF-1 and N-formylmethionyl-tRNA(fMet); mRNA recruitment can occur at any time during PIC assembly.

It is found in the cytoplasm. In terms of biological role, one of the essential components for the initiation of protein synthesis. Stabilizes the binding of IF-2 and IF-3 on the 30S subunit to which N-formylmethionyl-tRNA(fMet) subsequently binds. Helps modulate mRNA selection, yielding the 30S pre-initiation complex (PIC). Upon addition of the 50S ribosomal subunit IF-1, IF-2 and IF-3 are released leaving the mature 70S translation initiation complex. The chain is Translation initiation factor IF-1 from Mycoplasmoides gallisepticum (strain R(low / passage 15 / clone 2)) (Mycoplasma gallisepticum).